The chain runs to 390 residues: Cold-responsive protein kinase 1 (390 aa).

Residues 41–320 (FSAENKIGEG…VRLLTGEKDI (280 aa)) form the Protein kinase domain. Residues 47 to 55 (IGEGGFGSV) and Lys69 each bind ATP. At Tyr114 the chain carries Phosphotyrosine. The active-site Proton acceptor is Asp169. A phosphoserine mark is found at Ser173 and Ser202. 2 positions are modified to phosphothreonine: Thr203 and Thr208. Tyr216 is subject to Phosphotyrosine. The tract at residues 345-390 (TKTEQVNRQNYTNPSSSSNGSSRDHSNAYSSGASSANAGNTFSSTI) is disordered. Over residues 354–390 (NYTNPSSSSNGSSRDHSNAYSSGASSANAGNTFSSTI) the composition is skewed to low complexity.

Belongs to the protein kinase superfamily. Ser/Thr protein kinase family. Interacts with and phosphorylates 14-3-3 proteins. Binds to GRF6 at the plasma membrane. Post-translationally, autophosphorylated.

The protein localises to the cell membrane. The enzyme catalyses L-seryl-[protein] + ATP = O-phospho-L-seryl-[protein] + ADP + H(+). It catalyses the reaction L-threonyl-[protein] + ATP = O-phospho-L-threonyl-[protein] + ADP + H(+). Activated by cold. Its function is as follows. Negative regulator of freezing tolerance that phosphorylates 14-3-3 proteins (e.g. GRF6) thus triggering their translocation from the cytosol to the nucleus in response to cold stress. This Arabidopsis thaliana (Mouse-ear cress) protein is Cold-responsive protein kinase 1.